A 623-amino-acid chain; its full sequence is Leucine aminopeptidase 2 (623 aa).

The disordered stretch occupies residues 1–23; sequence MRRCTKNSRSTNPPRDPNTLSNY. Polar residues predominate over residues 7 to 23; sequence NSRSTNPPRDPNTLSNY. Residues 145-147 and 277-282 each bind a peptide; these read QCQ and PYGGME. H306 is a Zn(2+) binding site. E307 acts as the Proton acceptor in catalysis. Zn(2+) contacts are provided by H310 and E329. Residue Y394 is the Proton donor of the active site.

Belongs to the peptidase M1 family. The cofactor is Zn(2+).

It localises to the cytoplasm. The protein localises to the nucleus. The enzyme catalyses an epoxide + H2O = an ethanediol. Functionally, aminopeptidase that preferentially cleaves di- and tripeptides. Also has low epoxide hydrolase activity (in vitro). Can hydrolyze the epoxide leukotriene LTA(4) but it forms preferentially 5,6-dihydroxy-7,9,11,14-eicosatetraenoic acid rather than the cytokine leukotriene B(4) as the product compared to the homologous mammalian enzyme (in vitro). The polypeptide is Leucine aminopeptidase 2 (Ajellomyces capsulatus (strain NAm1 / WU24) (Darling's disease fungus)).